We begin with the raw amino-acid sequence, 351 residues long: N-acetyl-gamma-glutamyl-phosphate reductase (351 aa).

The active site involves C154.

This sequence belongs to the NAGSA dehydrogenase family. Type 1 subfamily.

It localises to the cytoplasm. The catalysed reaction is N-acetyl-L-glutamate 5-semialdehyde + phosphate + NADP(+) = N-acetyl-L-glutamyl 5-phosphate + NADPH + H(+). It participates in amino-acid biosynthesis; L-arginine biosynthesis; N(2)-acetyl-L-ornithine from L-glutamate: step 3/4. Functionally, catalyzes the NADPH-dependent reduction of N-acetyl-5-glutamyl phosphate to yield N-acetyl-L-glutamate 5-semialdehyde. This is N-acetyl-gamma-glutamyl-phosphate reductase from Prochlorococcus marinus (strain MIT 9312).